The following is a 144-amino-acid chain: MIFSDTVRYALIALAYLALNRDRLVKVEEIAKVHKIPRPFLAKVMHELSKRGVVYSVKGPRGGFSLAKEPDKITIWDIIELFGDAYKYEMCLLMPHKCSEFADNPCIVHHKWEELKSQIQDFFKGTTIKDLINIEEKHLFPVSR.

An HTH rrf2-type domain is found at 2–133; the sequence is IFSDTVRYAL…KGTTIKDLIN (132 aa).

This Aquifex aeolicus (strain VF5) protein is Putative HTH-type transcriptional regulator aq_268.